We begin with the raw amino-acid sequence, 629 residues long: Phosphomethylpyrimidine synthase (629 aa).

Residues Asn215, Met244, Tyr273, His309, 329–331 (SRG), 370–373 (DGLR), and Glu409 contribute to the substrate site. His413 is a Zn(2+) binding site. Residue Tyr436 participates in substrate binding. Zn(2+) is bound at residue His477. Positions 557, 560, and 565 each coordinate [4Fe-4S] cluster. The tract at residues 589 to 610 (ENIKRETSAEEAEEAREGMSDM) is disordered.

The protein belongs to the ThiC family. In terms of assembly, homodimer. [4Fe-4S] cluster is required as a cofactor.

It carries out the reaction 5-amino-1-(5-phospho-beta-D-ribosyl)imidazole + S-adenosyl-L-methionine = 4-amino-2-methyl-5-(phosphooxymethyl)pyrimidine + CO + 5'-deoxyadenosine + formate + L-methionine + 3 H(+). It participates in cofactor biosynthesis; thiamine diphosphate biosynthesis. Its function is as follows. Catalyzes the synthesis of the hydroxymethylpyrimidine phosphate (HMP-P) moiety of thiamine from aminoimidazole ribotide (AIR) in a radical S-adenosyl-L-methionine (SAM)-dependent reaction. The protein is Phosphomethylpyrimidine synthase of Erythrobacter litoralis (strain HTCC2594).